A 315-amino-acid chain; its full sequence is Ribosomal protein L11 methyltransferase (315 aa).

Thr162, Gly183, Asp205, and Asn248 together coordinate S-adenosyl-L-methionine.

The protein belongs to the methyltransferase superfamily. PrmA family.

It is found in the cytoplasm. The enzyme catalyses L-lysyl-[protein] + 3 S-adenosyl-L-methionine = N(6),N(6),N(6)-trimethyl-L-lysyl-[protein] + 3 S-adenosyl-L-homocysteine + 3 H(+). Functionally, methylates ribosomal protein L11. The polypeptide is Ribosomal protein L11 methyltransferase (Enterococcus faecalis (strain ATCC 700802 / V583)).